The chain runs to 417 residues: Serine hydroxymethyltransferase (417 aa).

(6S)-5,6,7,8-tetrahydrofolate contacts are provided by residues L121 and 125–127 (GHL). The residue at position 229 (K229) is an N6-(pyridoxal phosphate)lysine. 355–357 (SPF) provides a ligand contact to (6S)-5,6,7,8-tetrahydrofolate.

Belongs to the SHMT family. In terms of assembly, homodimer. Requires pyridoxal 5'-phosphate as cofactor.

The protein resides in the cytoplasm. It catalyses the reaction (6R)-5,10-methylene-5,6,7,8-tetrahydrofolate + glycine + H2O = (6S)-5,6,7,8-tetrahydrofolate + L-serine. It participates in one-carbon metabolism; tetrahydrofolate interconversion. The protein operates within amino-acid biosynthesis; glycine biosynthesis; glycine from L-serine: step 1/1. Catalyzes the reversible interconversion of serine and glycine with tetrahydrofolate (THF) serving as the one-carbon carrier. This reaction serves as the major source of one-carbon groups required for the biosynthesis of purines, thymidylate, methionine, and other important biomolecules. Also exhibits THF-independent aldolase activity toward beta-hydroxyamino acids, producing glycine and aldehydes, via a retro-aldol mechanism. The protein is Serine hydroxymethyltransferase of Yersinia pestis bv. Antiqua (strain Antiqua).